The following is a 533-amino-acid chain: Probable RNA-binding protein 46 (533 aa).

RRM domains follow at residues cysteine 61–aspartate 139, cysteine 141–proline 223, and lysine 236–proline 308.

Interacts with YTHDC2, MEIOC, MOV10, CNOT6L, DDX4, UPF1 and PABPC1.

The protein resides in the cytoplasm. Essential for male and female fertility, playing a crucial role in regulating germ cell development by ensuring the proper progression of meiosis prophase I. Regulates mitotic-to-meiotic transition in spermatogenesis by forming a complex with MEIOC and YTHDC2 which recognizes and down-regulates mitotic transcripts for a successful meiotic entry. Required for normal synaptonemal complex formation during meiosis, binding meiotic cohesin subunit mRNAs containing GCCUAU/GUUCGA motifs in their 3'UTRs regions and positively regulating their translation. Required for spermatogonial differentiation in both developing and adult testis. In Homo sapiens (Human), this protein is Probable RNA-binding protein 46 (RBM46).